The chain runs to 376 residues: N-acetyldiaminopimelate deacetylase (376 aa).

The active site involves D69. Catalysis depends on E128, which acts as the Proton acceptor.

This sequence belongs to the peptidase M20A family. N-acetyldiaminopimelate deacetylase subfamily.

It carries out the reaction N-acetyl-(2S,6S)-2,6-diaminopimelate + H2O = (2S,6S)-2,6-diaminopimelate + acetate. Its pathway is amino-acid biosynthesis; L-lysine biosynthesis via DAP pathway; LL-2,6-diaminopimelate from (S)-tetrahydrodipicolinate (acetylase route): step 3/3. Functionally, catalyzes the conversion of N-acetyl-diaminopimelate to diaminopimelate and acetate. This is N-acetyldiaminopimelate deacetylase from Bacillus thuringiensis subsp. konkukian (strain 97-27).